A 321-amino-acid chain; its full sequence is MLTDRVLTLLAPALRASGAIVVDATVGLGGHAAAVLTAFPHVRLVGLDRDPDALERSGERLHGLAPGRVELVHAVYDEVAEILDRLGHPVVQGILFDLGVSSLQLDTDDRGFAYSRDAPLDMRMDQTRGRTAADVLNTYDADALTRILREYGEERFARRIAGAIVQARAVTPFATSARLADLVRDAIPAPARRTGGNPAKRTFQALRIEVNAELDVLARALPAAFDALAVSGRLVVLSYHSLEDRLVKRQLRGYAEASVPPDLPVVPEGAGPRLRWLTRGAEPASETEKAENPRAASVRLRAVERTAPNPDHTRKPTGGAS.

Residues 29 to 31 (GGH), Asp-48, Tyr-76, Asp-97, and Gln-104 each bind S-adenosyl-L-methionine. A disordered region spans residues 277–321 (LTRGAEPASETEKAENPRAASVRLRAVERTAPNPDHTRKPTGGAS).

Belongs to the methyltransferase superfamily. RsmH family.

It is found in the cytoplasm. It carries out the reaction cytidine(1402) in 16S rRNA + S-adenosyl-L-methionine = N(4)-methylcytidine(1402) in 16S rRNA + S-adenosyl-L-homocysteine + H(+). Functionally, specifically methylates the N4 position of cytidine in position 1402 (C1402) of 16S rRNA. The polypeptide is Ribosomal RNA small subunit methyltransferase H (Frankia casuarinae (strain DSM 45818 / CECT 9043 / HFP020203 / CcI3)).